A 357-amino-acid polypeptide reads, in one-letter code: Queuosine-tRNA galactosyltransferase (357 aa).

It belongs to the glycosyltransferase 2 family.

It localises to the cytoplasm. It carries out the reaction queuosine(34) in tRNA(Tyr) + UDP-alpha-D-galactose = O-5''-beta-D-galactosylqueuosine(34) in tRNA(Tyr) + UDP + H(+). In terms of biological role, glycosyltransferase that specifically catalyzes galactosylation of cytoplasmic tRNA(Tyr) modified with queuosine at position 34 (queuosine(34)). Galactosylates the cyclopentene hydroxyl group of queuosine(34) in tRNA(Tyr) to form galactosyl-queuosine(34). Mannosylation of queuosine(34) in tRNA(Tyr) is required to slow-down elongation at cognate codons UAC and suppress stop codon readthrough, thereby regulating protein translation. This chain is Queuosine-tRNA galactosyltransferase, found in Rattus norvegicus (Rat).